Reading from the N-terminus, the 141-residue chain is Hemoglobin subunit alpha-A (141 aa).

In terms of domain architecture, Globin spans 1–141; the sequence is VLSPADKSNV…VGTVLTAKYR (141 aa). His58 is a binding site for O2. His87 is a heme b binding site.

It belongs to the globin family. In terms of assembly, heterotetramer of two alpha chains and two beta chains. Red blood cells.

Involved in oxygen transport from the lung to the various peripheral tissues. In Passer montanus (Eurasian tree sparrow), this protein is Hemoglobin subunit alpha-A (HBAA).